The primary structure comprises 134 residues: Proline-rich nuclear receptor coactivator 2 (134 aa).

Residues M1 to S74 are disordered. Polar residues-rich tracts occupy residues D11–H24 and S52–K61. Low complexity predominate over residues S62–S74. The short motif at S94–S100 is the SH3-binding element.

Belongs to the PNRC family. PNRC2 subfamily. In terms of assembly, interacts with UPF1/RENT1; preferentially interacts with hyperphosphorylated form. Interacts with DCP1A. Interacts with many nuclear receptors including ESR1, ESRRA, ESRRG, NR3C1/GR, NR5A1, PGR, TR, RAR and RXR.

It is found in the nucleus. It localises to the cytoplasm. Its subcellular location is the P-body. Involved in nonsense-mediated mRNA decay (NMD) by acting as a bridge between the mRNA decapping complex and the NMD machinery. May act by targeting the NMD machinery to the P-body and recruiting the decapping machinery to aberrant mRNAs. Required for UPF1/RENT1 localization to the P-body. Plays a role in glucocorticoid receptor-mediated mRNA degradation by interacting with the glucocorticoid receptor NR3C1 in a ligand-dependent manner when it is bound to the 5' UTR of target mRNAs and recruiting the RNA helicase UPF1 and the mRNA-decapping enzyme DCP1A, leading to RNA decay. Also acts as a nuclear receptor coactivator. May play a role in controlling the energy balance between energy storage and energy expenditure. The sequence is that of Proline-rich nuclear receptor coactivator 2 (Pnrc2) from Rattus norvegicus (Rat).